Reading from the N-terminus, the 201-residue chain is Small ribosomal subunit protein uS4 (201 aa).

The region spanning Ser91 to Val157 is the S4 RNA-binding domain.

Belongs to the universal ribosomal protein uS4 family. Part of the 30S ribosomal subunit. Contacts protein S5. The interaction surface between S4 and S5 is involved in control of translational fidelity.

In terms of biological role, one of the primary rRNA binding proteins, it binds directly to 16S rRNA where it nucleates assembly of the body of the 30S subunit. Functionally, with S5 and S12 plays an important role in translational accuracy. This chain is Small ribosomal subunit protein uS4, found in Mycobacterium leprae (strain Br4923).